Reading from the N-terminus, the 38-residue chain is Large ribosomal subunit protein bL36 (38 aa).

It belongs to the bacterial ribosomal protein bL36 family.

In Buchnera aphidicola subsp. Baizongia pistaciae (strain Bp), this protein is Large ribosomal subunit protein bL36.